The chain runs to 131 residues: Snaclec macrovipecetin subunit alpha (131 aa).

3 cysteine pairs are disulfide-bonded: C2/C13, C30/C125, and C100/C117. One can recognise a C-type lectin domain in the interval 9 to 126 (HEEHCYKVFR…CEDKNPFICK (118 aa)).

Heterodimer of subunits alpha and beta; disulfide-linked. As to expression, expressed by the venom gland.

Its subcellular location is the secreted. In terms of biological role, interferes with one step of hemostasis (modulation of platelet aggregation, or coagulation cascade, for example). The sequence is that of Snaclec macrovipecetin subunit alpha from Macrovipera lebetinus (Levantine viper).